A 115-amino-acid polypeptide reads, in one-letter code: Succinate dehydrogenase assembly factor 3, mitochondrial (115 aa).

This sequence belongs to the complex I LYR family. SDHAF3 subfamily. Interacts with the iron-sulfur protein subunit within the SDH catalytic dimer.

Its subcellular location is the mitochondrion matrix. Its function is as follows. Plays an essential role in the assembly of succinate dehydrogenase (SDH), an enzyme complex (also referred to as respiratory complex II) that is a component of both the tricarboxylic acid (TCA) cycle and the mitochondrial electron transport chain, and which couples the oxidation of succinate to fumarate with the reduction of ubiquinone (coenzyme Q) to ubiquinol. Promotes maturation of the iron-sulfur protein subunit of the SDH catalytic dimer, protecting it from the deleterious effects of oxidants. May act together with SDHAF1. This Nematostella vectensis (Starlet sea anemone) protein is Succinate dehydrogenase assembly factor 3, mitochondrial (acn9).